The following is an 814-amino-acid chain: DNA topoisomerase 1 (814 aa).

The span at 1–12 (MSSSDSDSVSLS) shows a compositional bias: low complexity. Residues 1 to 180 (MSSSDSDSVS…PNDEEDEDED (180 aa)) are disordered. Over residues 13-22 (IRRRQRRGSS) the composition is skewed to basic residues. Phosphoserine occurs at positions 52, 54, and 136. Position 138 is a phosphothreonine (threonine 138). 3 interaction with DNA regions span residues 404–405 (KY), 467–472 (RAGNEK), and 559–561 (SAK). Residues 411–814 (GSSLKGQSDL…AADTPPDWKW (404 aa)) form the Topo IB-type catalytic domain. The active-site O-(3'-phospho-DNA)-tyrosine intermediate is tyrosine 773.

This sequence belongs to the type IB topoisomerase family. In terms of assembly, monomer.

It carries out the reaction ATP-independent breakage of single-stranded DNA, followed by passage and rejoining.. Functionally, releases the supercoiling and torsional tension of DNA introduced during the DNA replication and transcription by transiently cleaving and rejoining one strand of the DNA duplex. Introduces a single-strand break via transesterification at a target site in duplex DNA. The scissile phosphodiester is attacked by the catalytic tyrosine of the enzyme, resulting in the formation of a DNA-(3'-phosphotyrosyl)-enzyme intermediate and the expulsion of a 5'-OH DNA strand. TThe free DNA strand then rotates around the intact phosphodiester bond on the opposing strand, thus removing DNA supercoils. Finally, in the religation step, the DNA 5'-OH attacks the covalent intermediate to expel the active-site tyrosine and restore the DNA phosphodiester backbone. In Schizosaccharomyces pombe (strain 972 / ATCC 24843) (Fission yeast), this protein is DNA topoisomerase 1 (top1).